A 596-amino-acid chain; its full sequence is 3-hydroxy-3-methylglutaryl-coenzyme A reductase 1 (596 aa).

A disordered region spans residues 1 to 29; it reads MDVRRRPVKPLYTSKDASAGEPLKQQEVS. 2 helical membrane passes run 41–61 and 83–103; these read LYLT…FLLV and AMVS…IGFV. Residues 104–183 are linker; sequence QSFVSRSNSD…SPIIMPALSE (80 aa). The catalytic stretch occupies residues 184 to 596; that stretch reads DDEEIIQSVV…YNRSIKDISK (413 aa). The active-site Charge relay system is the Glu-278. N-linked (GlcNAc...) asparagine glycosylation occurs at Asn-342. Catalysis depends on Lys-410, which acts as the Charge relay system. The N-linked (GlcNAc...) asparagine glycan is linked to Asn-455. Asp-486 serves as the catalytic Charge relay system. His-584 (proton donor) is an active-site residue. Asn-588 carries an N-linked (GlcNAc...) asparagine glycan.

This sequence belongs to the HMG-CoA reductase family. Expressed in flower primordia and anthers.

It is found in the endoplasmic reticulum membrane. The catalysed reaction is (R)-mevalonate + 2 NADP(+) + CoA = (3S)-3-hydroxy-3-methylglutaryl-CoA + 2 NADPH + 2 H(+). It participates in metabolic intermediate biosynthesis; (R)-mevalonate biosynthesis; (R)-mevalonate from acetyl-CoA: step 3/3. Functionally, catalyzes the synthesis of mevalonate. The specific precursor of all isoprenoid compounds present in plants. The polypeptide is 3-hydroxy-3-methylglutaryl-coenzyme A reductase 1 (HMG1) (Solanum tuberosum (Potato)).